The sequence spans 517 residues: MVPSLERGISITSSFNLDRMFDSSPGKEQQQPHLAETTMPESQTQDSLGGSPVETSRPMTSRLISRRQDKQQSETEMMKDRFTKLLLGEDMSGGGKGVSSALALSNAITNLAASIFGEQTKLQPMAPDRRARWKKEIDWLLSVTDHIVEFVPSQQISKEGVCTEIMVTRQRGDLLMNIPALRKLDAMLIDTLDNFRGHNEFWYVSRDSEEGKQARNERTKDKWWLPPVKVPPNGLSESARRMLHFQKDSVSQVQKAAMAINAQVLSEMAIPDSYIESLPKNGRVSLGDSLYKSITEEWFDPEQFLSTLDLSTEHKVLDVKNRIEASIVIWKRKLHLKDNKSSWGSAVSLEKRELFEERAETILVLLKQKFPGLPQSSLDISKIQYNKDVGHAVLESYSRILESLGYTEMSRIDDVLYADSLARKQCTGEETSDGGKIATETDSASAGSSNYSGEEIEKLESQNSSKTTLLDFIGWSDNSSKGQSEKPPKSPRMTPKKLSYLEKLENLNGFRSPKDRH.

2 disordered regions span residues 16–76 and 428–517; these read NLDR…SETE and GEET…KDRH. The span at 39 to 63 shows a compositional bias: polar residues; that stretch reads MPESQTQDSLGGSPVETSRPMTSRL. The PRONE domain occupies 65-429; that stretch reads SRRQDKQQSE…SLARKQCTGE (365 aa). The span at 66-76 shows a compositional bias: basic and acidic residues; that stretch reads RRQDKQQSETE. A compositionally biased stretch (polar residues) spans 440 to 452; it reads ETDSASAGSSNYS.

As to quaternary structure, interacts with ARAC11/ROP1 and ARAC10/ROP11. Interacts with PRK6. Expressed in pollen grains and pollen tubes.

The protein localises to the cell membrane. Guanine-nucleotide exchange factor (GEF) that acts as an activator of Rop (Rho of plants) GTPases by promoting the exchange of GDP for GTP. The chain is Rop guanine nucleotide exchange factor 9 from Arabidopsis thaliana (Mouse-ear cress).